The primary structure comprises 365 residues: Putative F-box/kelch-repeat protein At4g39290 (365 aa).

The 49-residue stretch at 10–58 folds into the F-box domain; that stretch reads QMTFSMLPDDLVLNCLARVSKVYYPSLSFVSKKFRSLIASTELQELRSF. 2 Kelch repeats span residues 118–165 and 167–213; these read DIYA…CVLN and KIYV…KIVG.

The chain is Putative F-box/kelch-repeat protein At4g39290 from Arabidopsis thaliana (Mouse-ear cress).